A 949-amino-acid chain; its full sequence is Protocadherin alpha-11 (949 aa).

Positions 1–29 are cleaved as a signal peptide; it reads MFGFQRRGLGTPRLQLWLLLLEFWEVGSG. 6 Cadherin domains span residues 30–133, 157–242, 243–349, 350–454, 455–564, and 580–677; these read QLHY…PPVF, ASDA…DPEF, DKSE…SPEV, AVTS…APAF, AQPE…APAL, and VPRS…APKA. The Extracellular portion of the chain corresponds to 30–696; it reads QLHYSVSEEA…SPEAALVDVN (667 aa). N265 and N304 each carry an N-linked (GlcNAc...) asparagine glycan. A glycan (N-linked (GlcNAc...) asparagine) is linked at N547. Residues 697–717 traverse the membrane as a helical segment; it reads VYLIIAICVVSSLLVLTLLLY. The Cytoplasmic portion of the chain corresponds to 718–949; it reads TALWWSATPT…GNSTTDNSDQ (232 aa). PXXP repeat units follow at residues 733–736 and 773–776; these read PGKP and PSLP. Residues 733 to 893 are 6 X 4 AA repeats of P-X-X-P; it reads PGKPTLVCSR…PDKFIIPGSP (161 aa). Disordered regions lie at residues 753–807 and 826–949; these read RRQR…DWRY and ILRA…NSDQ. Over residues 780-789 the composition is skewed to basic and acidic residues; sequence NKEEEGERQE. 4 PXXP repeats span residues 795-798, 831-834, 872-875, and 890-893; these read PGQP, PGGP, PGNP, and PGSP. Residues 908–922 show a composition bias toward basic and acidic residues; sequence DKSDFITFGKKEETK.

The protein resides in the cell membrane. Functionally, potential calcium-dependent cell-adhesion protein. May be involved in the establishment and maintenance of specific neuronal connections in the brain. This chain is Protocadherin alpha-11 (PCDHA11), found in Homo sapiens (Human).